We begin with the raw amino-acid sequence, 156 residues long: MRMANRIGAGRKSALQLSHLRTRLTSSAAAVATAPTLDPAPVPAPAAAPREWLVLFPDMPNVLDRRLEIRPRHSPNFVRLHKEQWVTWAGPIFEKHTFPGNPRRPFKGSVMVVNDVSKEQIWERLKSDPYIQERIWDLDNARVIPFVTNMRRTPKK.

The N-terminal stretch at 1–39 is a signal peptide; that stretch reads MRMANRIGAGRKSALQLSHLRTRLTSSAAAVATAPTLDP.

It belongs to the YciI family.

Its pathway is secondary metabolite biosynthesis. Part of the gene cluster that mediates the biosynthesis of aspercryptins, linear lipopeptides built from six amino acids including 2 highly unusual and nonproteogenic amino acids, 2-amino-octanoic acid (2aoa) and 2-amino-dodecanol (2adol). The core structure of aspercryptins is as follows: Ser/Ala-Thr-Ile/Val-2aoa-Aasn-2adol. The first step of aspercryptin biosynthesis is the generation of the fatty acid precursors, octanoic and dodecanoic acids, by the FAS subunits atnF and atnM. The fatty acid precursors are likely transformed into the corresponding alpha-amino fatty acids in three steps. First, they are hydroxylated by the cytochrome P450 monooxygenase atnE, then oxidized to the corresponding alpha-keto acids by the NAD(P)-dependent oxidoreductase atnD, and finally converted to the alpha-amino fatty acids by the PLP-dependent aminotransferases atnH or atnJ. the alpha-amino fatty acids, 2-amino-octanoic and 2-amino-dodecanoic acids, are recognized, activated, and covalently tethered to the NRPS atnA by its fourth and sixth adenylation domains. The second module of atnA is the Thr module and contains an epimerase (E) domain responsible for the epimerization of Thr to D-allo-Thr. Additionally, despite atnA having only one epimerase domain, the first amino acid of aspercryptin A1 is D-Ser, suggesting that serine is either loaded directly as D-Ser on the first module or that the epimerase domain in the threonine module epimerizes both L-Ser and L-Thr. After condensation of the hexapeptide of aspercryptin, the C-terminal reductase (TE) domain might be involved in the reductive release and production of the aldehyde hexapeptide. Further reduction would generate aspercryptins. The variety of aspercryptins produced reflects the flexibility of the atnA NRPS, allowing incorporation of alanine instead of serine, valine for isoleucine, and a C10 fatty amino alcohol instead of the C12 version. AtnB seems to be involved in the selectivity for Ile versus Val by the third module. Moreover, type B, C and D aspercryptins have an additional N-terminal cichorine, acetyl and propionyl group respectively. The chain is Aspercryptin biosynthesis cluster protein B from Emericella nidulans (strain FGSC A4 / ATCC 38163 / CBS 112.46 / NRRL 194 / M139) (Aspergillus nidulans).